Consider the following 1232-residue polypeptide: DNA topoisomerase 2 (1232 aa).

Residues N65, N94, S122–N124, G135–K142, and Q352–K354 contribute to the ATP site. Residues R432–I546 enclose the Toprim domain. Mg(2+)-binding residues include E438, D515, and D517. The region spanning L681–L1097 is the Topo IIA-type catalytic domain. The active-site O-(5'-phospho-DNA)-tyrosine intermediate is Y771. Residues S952 to G961 are interaction with DNA. Residues Y1161–S1184 form a disordered region. The segment covering S1175–S1184 has biased composition (gly residues).

Belongs to the type II topoisomerase family. As to quaternary structure, homodimer. Requires Mg(2+) as cofactor. Mn(2+) serves as cofactor. Ca(2+) is required as a cofactor.

It is found in the nucleus. The catalysed reaction is ATP-dependent breakage, passage and rejoining of double-stranded DNA.. Functionally, control of topological states of DNA by transient breakage and subsequent rejoining of DNA strands. Topoisomerase II makes double-strand breaks. This is DNA topoisomerase 2 (TOP2) from Trypanosoma cruzi.